We begin with the raw amino-acid sequence, 346 residues long: Zinc-type alcohol dehydrogenase-like protein C1773.06c (346 aa).

It belongs to the zinc-containing alcohol dehydrogenase family. Quinone oxidoreductase subfamily.

The protein resides in the cytoplasm. The chain is Zinc-type alcohol dehydrogenase-like protein C1773.06c from Schizosaccharomyces pombe (strain 972 / ATCC 24843) (Fission yeast).